Consider the following 372-residue polypeptide: NAD(P)H-quinone oxidoreductase subunit 1 (372 aa).

8 consecutive transmembrane segments (helical) span residues 29-49 (WIPL…LVVV), 97-117 (WLFT…YLIV), 130-150 (VGIF…LMSG), 176-196 (LAFS…IDIV), 204-224 (ILGW…IAAL), 254-274 (FGLF…VFAI), 308-328 (SLGI…AVLL), and 347-367 (FLLP…LAFP).

The protein belongs to the complex I subunit 1 family. As to quaternary structure, NDH-1 is composed of at least 11 different subunits.

Its subcellular location is the cellular thylakoid membrane. The enzyme catalyses a plastoquinone + NADH + (n+1) H(+)(in) = a plastoquinol + NAD(+) + n H(+)(out). It carries out the reaction a plastoquinone + NADPH + (n+1) H(+)(in) = a plastoquinol + NADP(+) + n H(+)(out). NDH-1 shuttles electrons from an unknown electron donor, via FMN and iron-sulfur (Fe-S) centers, to quinones in the respiratory and/or the photosynthetic chain. The immediate electron acceptor for the enzyme in this species is believed to be plastoquinone. Couples the redox reaction to proton translocation, and thus conserves the redox energy in a proton gradient. This Rippkaea orientalis (strain PCC 8801 / RF-1) (Cyanothece sp. (strain PCC 8801)) protein is NAD(P)H-quinone oxidoreductase subunit 1.